The sequence spans 62 residues: UPF0291 protein CLI_2672 (62 aa).

The protein belongs to the UPF0291 family.

Its subcellular location is the cytoplasm. In Clostridium botulinum (strain Langeland / NCTC 10281 / Type F), this protein is UPF0291 protein CLI_2672.